The sequence spans 264 residues: Glutamate racemase (264 aa).

Substrate-binding positions include D10–S11 and Y42–G43. C73 functions as the Proton donor/acceptor in the catalytic mechanism. N74–T75 lines the substrate pocket. Catalysis depends on C183, which acts as the Proton donor/acceptor. T184 to H185 is a substrate binding site.

It belongs to the aspartate/glutamate racemases family. As to quaternary structure, homodimer.

The enzyme catalyses L-glutamate = D-glutamate. It participates in cell wall biogenesis; peptidoglycan biosynthesis. Its function is as follows. Provides the (R)-glutamate required for cell wall biosynthesis. The protein is Glutamate racemase of Streptococcus pyogenes serotype M1.